The following is a 507-amino-acid chain: ATP synthase subunit alpha, chloroplastic (507 aa).

170 to 177 is an ATP binding site; that stretch reads GDRQTGKT.

Belongs to the ATPase alpha/beta chains family. In terms of assembly, F-type ATPases have 2 components, CF(1) - the catalytic core - and CF(0) - the membrane proton channel. CF(1) has five subunits: alpha(3), beta(3), gamma(1), delta(1), epsilon(1). CF(0) has four main subunits: a, b, b' and c.

Its subcellular location is the plastid. It is found in the chloroplast thylakoid membrane. The enzyme catalyses ATP + H2O + 4 H(+)(in) = ADP + phosphate + 5 H(+)(out). In terms of biological role, produces ATP from ADP in the presence of a proton gradient across the membrane. The alpha chain is a regulatory subunit. The polypeptide is ATP synthase subunit alpha, chloroplastic (Cucumis sativus (Cucumber)).